We begin with the raw amino-acid sequence, 403 residues long: MDLLSPLSAVILTYREADANALGRIGEEMRRCIEVIGPKTPMFVLHTCHRVEAYLYGASEEELSSLVERYKRHVESARILRGIEAARHLFRVAAGLESMLLGETDILGQLEEAYDRQVRAGFTRGLLKTVVERAVRVGKKVRTETGISRGPAGLGSLSIIYVSQFVDLKSAKVAVLGAGAVGAGLAKELAERGVAKLYILNRTLEKATEVAKKTGAEARPLTREEVERCLLECDVVFSAVHTLEYVIDMIPPGASVKVVVDLGVPQSVAPGLPIKVVRLSDLAELAQRYSALRKEEAKKAEAIVEEELEMLPKALAKRAVEEAVAEVMARAVEIAEEEGRRAGCEVAQLAAKTTVKRLLLPIVEELKKMAENGRVEHALEVSQIFTRLVGAPHGEPQNLKTVK.

Residues 47–50 (TCHR), Ser98, 103–105 (ETD), and Gln109 each bind substrate. Cys48 (nucleophile) is an active-site residue. 177 to 182 (GAGAVG) is a binding site for NADP(+).

The protein belongs to the glutamyl-tRNA reductase family. In terms of assembly, homodimer.

The catalysed reaction is (S)-4-amino-5-oxopentanoate + tRNA(Glu) + NADP(+) = L-glutamyl-tRNA(Glu) + NADPH + H(+). It functions in the pathway porphyrin-containing compound metabolism; protoporphyrin-IX biosynthesis; 5-aminolevulinate from L-glutamyl-tRNA(Glu): step 1/2. In terms of biological role, catalyzes the NADPH-dependent reduction of glutamyl-tRNA(Glu) to glutamate 1-semialdehyde (GSA). This is Glutamyl-tRNA reductase 2 from Pyrobaculum arsenaticum (strain DSM 13514 / JCM 11321 / PZ6).